We begin with the raw amino-acid sequence, 678 residues long: WD repeat-containing protein 48 (678 aa).

8 WD repeats span residues 28-67 (YNRN…QDPY), 73-112 (HHTD…CMST), 115-154 (THKD…ALTA), 166-205 (GNKD…KLMK), 208-247 (GHTD…CIAT), 250-289 (VHDE…IRVL), 292-334 (EEKA…NFRA), and 358-452 (KGGA…GFSS). Residues 608 to 629 (LDNESQTTSSSNNEKAGEQEKE) form a disordered region. Residues 610-621 (NESQTTSSSNNE) are compositionally biased toward low complexity.

The protein belongs to the WD repeat WDR48 family.

Its subcellular location is the nucleus. The protein resides in the cytoplasm. It is found in the lysosome. It localises to the late endosome. Its function is as follows. Regulator of deubiquitinating complexes, which acts as a strong activator of USP1, USP12 and USP46. Enhances the USP1-mediated deubiquitination of FANCD2; USP1 being almost inactive by itself. Activates deubiquitination by increasing the catalytic turnover without increasing the affinity of deubiquitinating enzymes for the substrate. Also activates deubiquitinating activity of complexes containing USP12. Docks at the distal end of the USP12 fingers domain and induces a cascade of structural changes leading to the activation of the enzyme. Together with RAD51AP1, promotes DNA repair by stimulating RAD51-mediated homologous recombination. Binds single-stranded DNA (ssDNA) and double-stranded DNA (dsDNA). DNA-binding is required both for USP1-mediated deubiquitination of FANCD2 and stimulation of RAD51-mediated homologous recombination: both WDR48/UAF1 and RAD51AP1 have coordinated role in DNA-binding during these processes. Together with ATAD5 and by regulating USP1 activity, has a role in PCNA-mediated translesion synthesis (TLS) by deubiquitinating monoubiquitinated PCNA. Together with ATAD5, has a role in recruiting RAD51 to stalled forks during replication stress. This Gallus gallus (Chicken) protein is WD repeat-containing protein 48 (WDR48).